A 377-amino-acid chain; its full sequence is DnaJ-related protein SCJ1 (377 aa).

The N-terminal stretch at 1–21 (MIPKLYIHLILSLLLLPLILA) is a signal peptide. Residues 23-88 (DYYAILEIDK…EKKKIYDQFG (66 aa)) form the J domain. The segment at 156–237 (GSSIEFTLNL…CHGKKVTKKN (82 aa)) adopts a CR-type zinc-finger fold. CXXCXGXG motif repeat units follow at residues 169 to 176 (CDACHGSG), 185 to 192 (CPDCQGRG), 211 to 218 (CGRCGGTG), and 225 to 232 (CKTCHGKK). A Cell attachment site motif is present at residues 288-290 (RGD). Positions 374–377 (KDEL) match the Prevents secretion from ER motif.

It is found in the endoplasmic reticulum lumen. Regulates protein folding in the endoplasmic reticulum lumen. Probably acts as a J-protein for the Hsp70-type chaperone KAR2 by stimulating its ATP-dependent reaction cycle and initiating folding reactions. Also involved in the endoplasmic reticulum-associated degradation (ERAD) process. Cooperates with KAR2 and another J-protein JEM1 to facilitate the export of ERAD substrates to the cytoplasm by maintaining them in a translocation-competent state and preventing their aggregation in the endoplasmic reticulum lumen. This chain is DnaJ-related protein SCJ1 (SCJ1), found in Saccharomyces cerevisiae (strain ATCC 204508 / S288c) (Baker's yeast).